A 1577-amino-acid chain; its full sequence is Pentafunctional AROM polypeptide (1577 aa).

A 3-dehydroquinate synthase region spans residues 1 to 392 (MASVGLEKVN…YGTSAHVVSD (392 aa)). NAD(+) contacts are provided by residues 80-83 (ETYK), 111-113 (GGV), and D116. R127 contacts 7-phospho-2-dehydro-3-deoxy-D-arabino-heptonate. 136 to 137 (TS) provides a ligand contact to NAD(+). Residues D143 and K149 each contribute to the 7-phospho-2-dehydro-3-deoxy-D-arabino-heptonate site. K158 serves as a coordination point for NAD(+). N159 provides a ligand contact to 7-phospho-2-dehydro-3-deoxy-D-arabino-heptonate. NAD(+) contacts are provided by residues 176-179 (WLET) and N187. E191 lines the Zn(2+) pocket. 7-phospho-2-dehydro-3-deoxy-D-arabino-heptonate is bound by residues 191 to 194 (EVIK) and K258. E268 (proton acceptor; for 3-dehydroquinate synthase activity) is an active-site residue. Residues 272-276 (RNLLN) and H279 each bind 7-phospho-2-dehydro-3-deoxy-D-arabino-heptonate. H279 contributes to the Zn(2+) binding site. The Proton acceptor; for 3-dehydroquinate synthase activity role is filled by H283. H295 and K364 together coordinate 7-phospho-2-dehydro-3-deoxy-D-arabino-heptonate. H295 contributes to the Zn(2+) binding site. Positions 405-863 (VYPFTDVRSS…WDVLHSRLGA (459 aa)) are EPSP synthase. The For EPSP synthase activity role is filled by C845. The segment at 882–1071 (VVLIGMRAAG…VPVKRSTFVC (190 aa)) is shikimate kinase. An ATP-binding site is contributed by 886 to 893 (GMRAAGKS). Residues 1072 to 1284 (LTFQNLLPEM…AAPGQLTLRQ (213 aa)) form a 3-dehydroquinase region. The Proton acceptor; for 3-dehydroquinate dehydratase activity role is filled by H1189. Catalysis depends on K1218, which acts as the Schiff-base intermediate with substrate; for 3-dehydroquinate dehydratase activity. The tract at residues 1297–1577 (PKKMFVVGSP…APVYDAVTQE (281 aa)) is shikimate dehydrogenase.

The protein in the N-terminal section; belongs to the sugar phosphate cyclases superfamily. Dehydroquinate synthase family. It in the 2nd section; belongs to the EPSP synthase family. In the 3rd section; belongs to the shikimate kinase family. This sequence in the 4th section; belongs to the type-I 3-dehydroquinase family. The protein in the C-terminal section; belongs to the shikimate dehydrogenase family. Homodimer. The cofactor is Zn(2+).

It is found in the cytoplasm. The catalysed reaction is 7-phospho-2-dehydro-3-deoxy-D-arabino-heptonate = 3-dehydroquinate + phosphate. It carries out the reaction 3-dehydroquinate = 3-dehydroshikimate + H2O. The enzyme catalyses shikimate + NADP(+) = 3-dehydroshikimate + NADPH + H(+). It catalyses the reaction shikimate + ATP = 3-phosphoshikimate + ADP + H(+). The catalysed reaction is 3-phosphoshikimate + phosphoenolpyruvate = 5-O-(1-carboxyvinyl)-3-phosphoshikimate + phosphate. The protein operates within metabolic intermediate biosynthesis; chorismate biosynthesis; chorismate from D-erythrose 4-phosphate and phosphoenolpyruvate: step 2/7. It participates in metabolic intermediate biosynthesis; chorismate biosynthesis; chorismate from D-erythrose 4-phosphate and phosphoenolpyruvate: step 3/7. It functions in the pathway metabolic intermediate biosynthesis; chorismate biosynthesis; chorismate from D-erythrose 4-phosphate and phosphoenolpyruvate: step 4/7. Its pathway is metabolic intermediate biosynthesis; chorismate biosynthesis; chorismate from D-erythrose 4-phosphate and phosphoenolpyruvate: step 5/7. The protein operates within metabolic intermediate biosynthesis; chorismate biosynthesis; chorismate from D-erythrose 4-phosphate and phosphoenolpyruvate: step 6/7. In terms of biological role, the AROM polypeptide catalyzes 5 consecutive enzymatic reactions in prechorismate polyaromatic amino acid biosynthesis. In Eremothecium gossypii (strain ATCC 10895 / CBS 109.51 / FGSC 9923 / NRRL Y-1056) (Yeast), this protein is Pentafunctional AROM polypeptide.